Here is a 104-residue protein sequence, read N- to C-terminus: L-rhamnose mutarotase (104 aa).

Tyr18 contacts substrate. The active-site Proton donor is His22. Substrate contacts are provided by residues Tyr41 and Trp76 to Trp77.

Belongs to the rhamnose mutarotase family. In terms of assembly, homodimer.

It localises to the cytoplasm. It catalyses the reaction alpha-L-rhamnose = beta-L-rhamnose. Its pathway is carbohydrate metabolism; L-rhamnose metabolism. Functionally, involved in the anomeric conversion of L-rhamnose. The chain is L-rhamnose mutarotase from Bacillus subtilis (strain 168).